We begin with the raw amino-acid sequence, 660 residues long: Bifunctional polymyxin resistance protein ArnA (660 aa).

The segment at 1-304 (MKAVVFAYHD…TLGLVAGARL (304 aa)) is formyltransferase ArnAFT. His-104 functions as the Proton donor; for formyltransferase activity in the catalytic mechanism. (6R)-10-formyltetrahydrofolate contacts are provided by residues Arg-114 and 136-140 (VKRAD). Positions 314-660 (RRTRVLILGV…QSVEPGDAEE (347 aa)) are dehydrogenase ArnADH. Residues Asp-347 and 368–369 (DI) contribute to the NAD(+) site. UDP-alpha-D-glucuronate-binding positions include Ala-393, Tyr-398, and 432–433 (TS). The active-site Proton acceptor; for decarboxylase activity is Glu-434. UDP-alpha-D-glucuronate-binding positions include Arg-460, Asn-492, 526-535 (KLIDGGRQKR), and Tyr-613. Catalysis depends on Arg-619, which acts as the Proton donor; for decarboxylase activity.

It in the N-terminal section; belongs to the Fmt family. UDP-L-Ara4N formyltransferase subfamily. The protein in the C-terminal section; belongs to the NAD(P)-dependent epimerase/dehydratase family. UDP-glucuronic acid decarboxylase subfamily. In terms of assembly, homohexamer, formed by a dimer of trimers.

The enzyme catalyses UDP-alpha-D-glucuronate + NAD(+) = UDP-beta-L-threo-pentopyranos-4-ulose + CO2 + NADH. It catalyses the reaction UDP-4-amino-4-deoxy-beta-L-arabinose + (6R)-10-formyltetrahydrofolate = UDP-4-deoxy-4-formamido-beta-L-arabinose + (6S)-5,6,7,8-tetrahydrofolate + H(+). Its pathway is nucleotide-sugar biosynthesis; UDP-4-deoxy-4-formamido-beta-L-arabinose biosynthesis; UDP-4-deoxy-4-formamido-beta-L-arabinose from UDP-alpha-D-glucuronate: step 1/3. It functions in the pathway nucleotide-sugar biosynthesis; UDP-4-deoxy-4-formamido-beta-L-arabinose biosynthesis; UDP-4-deoxy-4-formamido-beta-L-arabinose from UDP-alpha-D-glucuronate: step 3/3. It participates in bacterial outer membrane biogenesis; lipopolysaccharide biosynthesis. In terms of biological role, bifunctional enzyme that catalyzes the oxidative decarboxylation of UDP-glucuronic acid (UDP-GlcUA) to UDP-4-keto-arabinose (UDP-Ara4O) and the addition of a formyl group to UDP-4-amino-4-deoxy-L-arabinose (UDP-L-Ara4N) to form UDP-L-4-formamido-arabinose (UDP-L-Ara4FN). The modified arabinose is attached to lipid A and is required for resistance to polymyxin and cationic antimicrobial peptides. The sequence is that of Bifunctional polymyxin resistance protein ArnA from Erwinia tasmaniensis (strain DSM 17950 / CFBP 7177 / CIP 109463 / NCPPB 4357 / Et1/99).